A 348-amino-acid chain; its full sequence is Glucose 1-dehydrogenase 2 (348 aa).

Cys39 provides a ligand contact to Zn(2+). Substrate is bound at residue Thr41. Zn(2+) is bound by residues His64 and Glu65. The substrate site is built by Glu110 and Glu146. Glu146 contacts Zn(2+). NADP(+) contacts are provided by residues 178–181 (AGPV), 260–262 (LGV), and 289–291 (SVN). Substrate is bound at residue Asn291.

This sequence belongs to the zinc-containing alcohol dehydrogenase family. Glucose 1-dehydrogenase subfamily. Requires Zn(2+) as cofactor.

The catalysed reaction is D-glucose + NAD(+) = D-glucono-1,5-lactone + NADH + H(+). It carries out the reaction D-glucose + NADP(+) = D-glucono-1,5-lactone + NADPH + H(+). In terms of biological role, catalyzes the NAD(P)(+)-dependent oxidation of D-glucose to D-gluconate via gluconolactone. Can utilize both NAD(+) and NADP(+) as electron acceptor. Is involved in the degradation of glucose through a non-phosphorylative variant of the Entner-Doudoroff pathway. This is Glucose 1-dehydrogenase 2 from Vulcanisaeta moutnovskia (strain 768-28).